A 517-amino-acid polypeptide reads, in one-letter code: Perilipin-1 (517 aa).

Phosphoserine is present on serine 81. Phosphothreonine is present on threonine 85. 5 positions are modified to phosphoserine: serine 126, serine 130, serine 132, serine 137, and serine 174. The tract at residues 195–216 (DKESAPSSGRQRTQKAPKAKPS) is disordered. 3 positions are modified to phosphothreonine: threonine 223, threonine 298, and threonine 300. Residues 286 to 320 (LAASQDESHDDQTDTEGEETDDEEEEEESEAEENV) form a disordered region. The segment at 290–321 (QDESHDDQTDTEGEETDDEEEEEESEAEENVL) is required for interaction with CIDEC. Over residues 298–318 (TDTEGEETDDEEEEEESEAEE) the composition is skewed to acidic residues. A phosphoserine mark is found at serine 314, serine 384, serine 386, serine 410, serine 433, serine 439, serine 460, serine 492, and serine 494. The tract at residues 425–490 (SAEAERKGSG…AMPREKPARR (66 aa)) is disordered.

It belongs to the perilipin family. Interacts with ABHD5. Interacts with CIDEC. Interacts with AQP7. In terms of processing, major cAMP-dependent protein kinase-substrate in adipocytes, also dephosphorylated by PP1. When phosphorylated, may be maximally sensitive to HSL and when unphosphorylated, may play a role in the inhibition of lipolysis, by acting as a barrier in lipid droplet.

It is found in the endoplasmic reticulum. The protein localises to the lipid droplet. Its function is as follows. Modulator of adipocyte lipid metabolism. Coats lipid storage droplets to protect them from breakdown by hormone-sensitive lipase (HSL). Its absence may result in leanness. Plays a role in unilocular lipid droplet formation by activating CIDEC. Their interaction promotes lipid droplet enlargement and directional net neutral lipid transfer. May modulate lipolysis and triglyceride levels. This chain is Perilipin-1 (Plin1), found in Mus musculus (Mouse).